A 292-amino-acid chain; its full sequence is Bis(5'-nucleosyl)-tetraphosphatase, symmetrical (292 aa).

The disordered stretch occupies residues 271 to 292 (LSIEHPRHTHTPRRQAKKHSKK). Residues 277–292 (RHTHTPRRQAKKHSKK) show a composition bias toward basic residues.

The protein belongs to the Ap4A hydrolase family.

The catalysed reaction is P(1),P(4)-bis(5'-adenosyl) tetraphosphate + H2O = 2 ADP + 2 H(+). Hydrolyzes diadenosine 5',5'''-P1,P4-tetraphosphate to yield ADP. The chain is Bis(5'-nucleosyl)-tetraphosphatase, symmetrical (apaH) from Xylella fastidiosa (strain 9a5c).